We begin with the raw amino-acid sequence, 261 residues long: Pyridoxine-5'-phosphate oxidase (261 aa).

42-45 lines the pyridoxal 5'-phosphate pocket; it reads RGDP. 95–98 contacts FMN; sequence RMVL. Lysine 100 contacts pyridoxal 5'-phosphate. FMN is bound by residues 110–111, 116–117, and glutamine 139; these read FT and RK. Pyridoxal 5'-phosphate-binding residues include tyrosine 157, arginine 161, and serine 165. Residues 174-175 and tryptophan 219 each bind FMN; that span reads QS. Pyridoxal 5'-phosphate is bound at residue 225–227; the sequence is RLH. Residue arginine 229 participates in FMN binding. Threonine 238 is subject to Phosphothreonine. The residue at position 241 (serine 241) is a Phosphoserine.

This sequence belongs to the pyridoxamine 5'-phosphate oxidase family. Homodimer. Requires FMN as cofactor.

It catalyses the reaction pyridoxamine 5'-phosphate + O2 + H2O = pyridoxal 5'-phosphate + H2O2 + NH4(+). The enzyme catalyses pyridoxine 5'-phosphate + O2 = pyridoxal 5'-phosphate + H2O2. It participates in cofactor metabolism; pyridoxal 5'-phosphate salvage; pyridoxal 5'-phosphate from pyridoxamine 5'-phosphate: step 1/1. It functions in the pathway cofactor metabolism; pyridoxal 5'-phosphate salvage; pyridoxal 5'-phosphate from pyridoxine 5'-phosphate: step 1/1. Functionally, catalyzes the oxidation of either pyridoxine 5'-phosphate (PNP) or pyridoxamine 5'-phosphate (PMP) into pyridoxal 5'-phosphate (PLP). The chain is Pyridoxine-5'-phosphate oxidase (PNPO) from Bos taurus (Bovine).